We begin with the raw amino-acid sequence, 383 residues long: Pleckstrin homology domain-containing family A member 1 (383 aa).

2 PH domains span residues 7 to 112 (QNRI…KAIK) and 191 to 289 (AVIK…GAIV). At Val284 the chain carries Phosphoserine. The interval 362 to 383 (LPRSSQGTSRSRLSLQESQLPK) is disordered. Over residues 370–383 (SRSRLSLQESQLPK) the composition is skewed to low complexity.

In terms of assembly, interacts with MPDZ and PTPN13.

It localises to the cytoplasm. It is found in the cell membrane. The protein resides in the nucleus. In terms of biological role, binds specifically to phosphatidylinositol 3,4-diphosphate (PtdIns3,4P2), but not to other phosphoinositides. May recruit other proteins to the plasma membrane. This chain is Pleckstrin homology domain-containing family A member 1 (Plekha1), found in Mus musculus (Mouse).